The sequence spans 553 residues: Urocanate hydratase (553 aa).

Residues 45 to 46 (GG), Q123, 169 to 171 (GMG), D189, R194, 235 to 236 (NA), 256 to 260 (QTSAH), 266 to 267 (YV), Y315, and G485 contribute to the NAD(+) site.

It belongs to the urocanase family. The cofactor is NAD(+).

The protein localises to the cytoplasm. It catalyses the reaction 4-imidazolone-5-propanoate = trans-urocanate + H2O. The protein operates within amino-acid degradation; L-histidine degradation into L-glutamate; N-formimidoyl-L-glutamate from L-histidine: step 2/3. Its function is as follows. Catalyzes the conversion of urocanate to 4-imidazolone-5-propionate. The sequence is that of Urocanate hydratase from Staphylococcus aureus (strain COL).